Consider the following 730-residue polypeptide: 1,4-alpha-glucan branching enzyme GlgB (730 aa).

The active-site Nucleophile is the Asp405. Glu458 serves as the catalytic Proton donor.

This sequence belongs to the glycosyl hydrolase 13 family. GlgB subfamily. In terms of assembly, monomer.

The catalysed reaction is Transfers a segment of a (1-&gt;4)-alpha-D-glucan chain to a primary hydroxy group in a similar glucan chain.. The protein operates within glycan biosynthesis; glycogen biosynthesis. Its function is as follows. Catalyzes the formation of the alpha-1,6-glucosidic linkages in glycogen by scission of a 1,4-alpha-linked oligosaccharide from growing alpha-1,4-glucan chains and the subsequent attachment of the oligosaccharide to the alpha-1,6 position. In Haemophilus influenzae (strain ATCC 51907 / DSM 11121 / KW20 / Rd), this protein is 1,4-alpha-glucan branching enzyme GlgB (glgB).